A 170-amino-acid polypeptide reads, in one-letter code: ATP synthase subunit b (170 aa).

The chain crosses the membrane as a helical span at residues 22 to 41 (ILNWAVVVFGLYKFLPGFLG). Residues 72 to 98 (AKKDLSSAEEKASQIKADSLKRSESIR) are disordered.

Belongs to the ATPase B chain family. As to quaternary structure, F-type ATPases have 2 components, F(1) - the catalytic core - and F(0) - the membrane proton channel. F(1) has five subunits: alpha(3), beta(3), gamma(1), delta(1), epsilon(1). F(0) has four main subunits: a(1), b(1), b'(1) and c(10-14). The alpha and beta chains form an alternating ring which encloses part of the gamma chain. F(1) is attached to F(0) by a central stalk formed by the gamma and epsilon chains, while a peripheral stalk is formed by the delta, b and b' chains.

It is found in the cellular thylakoid membrane. F(1)F(0) ATP synthase produces ATP from ADP in the presence of a proton or sodium gradient. F-type ATPases consist of two structural domains, F(1) containing the extramembraneous catalytic core and F(0) containing the membrane proton channel, linked together by a central stalk and a peripheral stalk. During catalysis, ATP synthesis in the catalytic domain of F(1) is coupled via a rotary mechanism of the central stalk subunits to proton translocation. Functionally, component of the F(0) channel, it forms part of the peripheral stalk, linking F(1) to F(0). The protein is ATP synthase subunit b of Prochlorococcus marinus (strain MIT 9301).